Consider the following 335-residue polypeptide: Tetraacyldisaccharide 4'-kinase (335 aa).

Residue 58 to 65 coordinates ATP; it reads VVGGSGKT.

It belongs to the LpxK family.

The enzyme catalyses a lipid A disaccharide + ATP = a lipid IVA + ADP + H(+). Its pathway is glycolipid biosynthesis; lipid IV(A) biosynthesis; lipid IV(A) from (3R)-3-hydroxytetradecanoyl-[acyl-carrier-protein] and UDP-N-acetyl-alpha-D-glucosamine: step 6/6. Functionally, transfers the gamma-phosphate of ATP to the 4'-position of a tetraacyldisaccharide 1-phosphate intermediate (termed DS-1-P) to form tetraacyldisaccharide 1,4'-bis-phosphate (lipid IVA). This Hydrogenovibrio crunogenus (strain DSM 25203 / XCL-2) (Thiomicrospira crunogena) protein is Tetraacyldisaccharide 4'-kinase.